The chain runs to 397 residues: Formate-dependent phosphoribosylglycinamide formyltransferase (397 aa).

Residues 22–23 and E82 contribute to the N(1)-(5-phospho-beta-D-ribosyl)glycinamide site; that span reads EL. Residues R114, K155, 160–165, 195–198, and E203 each bind ATP; these read SSGKGQ and EGFV. The region spanning 119-312 is the ATP-grasp domain; sequence CLAAEELSLP…EFALHARAIL (194 aa). Residues E271 and E283 each contribute to the Mg(2+) site. N(1)-(5-phospho-beta-D-ribosyl)glycinamide-binding positions include D290, K360, and 367–368; that span reads RR.

It belongs to the PurK/PurT family. In terms of assembly, homodimer.

The enzyme catalyses N(1)-(5-phospho-beta-D-ribosyl)glycinamide + formate + ATP = N(2)-formyl-N(1)-(5-phospho-beta-D-ribosyl)glycinamide + ADP + phosphate + H(+). It functions in the pathway purine metabolism; IMP biosynthesis via de novo pathway; N(2)-formyl-N(1)-(5-phospho-D-ribosyl)glycinamide from N(1)-(5-phospho-D-ribosyl)glycinamide (formate route): step 1/1. Involved in the de novo purine biosynthesis. Catalyzes the transfer of formate to 5-phospho-ribosyl-glycinamide (GAR), producing 5-phospho-ribosyl-N-formylglycinamide (FGAR). Formate is provided by PurU via hydrolysis of 10-formyl-tetrahydrofolate. In Alcanivorax borkumensis (strain ATCC 700651 / DSM 11573 / NCIMB 13689 / SK2), this protein is Formate-dependent phosphoribosylglycinamide formyltransferase.